The following is a 305-amino-acid chain: Aspartate carbamoyltransferase catalytic subunit (305 aa).

Positions 51 and 52 each coordinate carbamoyl phosphate. Residue Lys79 participates in L-aspartate binding. Carbamoyl phosphate-binding residues include Arg101, His129, and Gln132. L-aspartate contacts are provided by Arg165 and Arg220. 2 residues coordinate carbamoyl phosphate: Gly258 and Pro259.

The protein belongs to the aspartate/ornithine carbamoyltransferase superfamily. ATCase family. Heterododecamer (2C3:3R2) of six catalytic PyrB chains organized as two trimers (C3), and six regulatory PyrI chains organized as three dimers (R2).

It catalyses the reaction carbamoyl phosphate + L-aspartate = N-carbamoyl-L-aspartate + phosphate + H(+). Its pathway is pyrimidine metabolism; UMP biosynthesis via de novo pathway; (S)-dihydroorotate from bicarbonate: step 2/3. In terms of biological role, catalyzes the condensation of carbamoyl phosphate and aspartate to form carbamoyl aspartate and inorganic phosphate, the committed step in the de novo pyrimidine nucleotide biosynthesis pathway. The polypeptide is Aspartate carbamoyltransferase catalytic subunit (Rubrobacter xylanophilus (strain DSM 9941 / JCM 11954 / NBRC 16129 / PRD-1)).